The chain runs to 58 residues: Small ribosomal subunit protein bS21C (58 aa).

Positions 38 to 58 (YEKPSLRRKRKAEAARKGGRY) are disordered. Residues 49-58 (AEAARKGGRY) show a composition bias toward basic and acidic residues.

The protein belongs to the bacterial ribosomal protein bS21 family.

This chain is Small ribosomal subunit protein bS21C (rpsU3), found in Nostoc sp. (strain PCC 7120 / SAG 25.82 / UTEX 2576).